Reading from the N-terminus, the 233-residue chain is Large ribosomal subunit protein uL1 (233 aa).

This sequence belongs to the universal ribosomal protein uL1 family. Part of the 50S ribosomal subunit.

In terms of biological role, binds directly to 23S rRNA. The L1 stalk is quite mobile in the ribosome, and is involved in E site tRNA release. Functionally, protein L1 is also a translational repressor protein, it controls the translation of the L11 operon by binding to its mRNA. The polypeptide is Large ribosomal subunit protein uL1 (Proteus vulgaris).